A 245-amino-acid chain; its full sequence is MLLLDKINELKKIVAESSSIVFFGGAGVSTESNIPDFRSENGLYKTKNNFSYPPEVMLSHTFFKNHTEDFFEFYREKMIFKDAKPNAAHYSLAKIEEQGKLKAIVTQNIDGLHQLAGSKNVYELHGSIHRNYCMDCGKSFDLEYVIKSETTIPKCDKCGGIVKPDVVLYEEGLDDSIIQNSVKAISEADTLIVGGTSLVVYPAAGLIRYFKGNKLILINKSATAYDNEADLVISDSIGKVLETVI.

Positions 1–245 constitute a Deacetylase sirtuin-type domain; it reads MLLLDKINEL…SIGKVLETVI (245 aa). Ala-26, Thr-30, Phe-37, Arg-38, Gln-107, Ile-109, Asp-110, and His-125 together coordinate NAD(+). Residue Phe-37 coordinates nicotinamide. Ile-109 and Asp-110 together coordinate nicotinamide. His-125 serves as the catalytic Proton acceptor. 4 residues coordinate Zn(2+): Cys-133, Cys-136, Cys-155, and Cys-158. 4 residues coordinate NAD(+): Thr-196, Ser-197, Asn-219, and Ile-237.

Belongs to the sirtuin family. Class U subfamily. Zn(2+) serves as cofactor.

It localises to the cytoplasm. The catalysed reaction is N(6)-acetyl-L-lysyl-[protein] + NAD(+) + H2O = 2''-O-acetyl-ADP-D-ribose + nicotinamide + L-lysyl-[protein]. NAD-dependent protein deacetylase which modulates the activities of several enzymes which are inactive in their acetylated form. The chain is NAD-dependent protein deacetylase from Clostridium acetobutylicum (strain ATCC 824 / DSM 792 / JCM 1419 / IAM 19013 / LMG 5710 / NBRC 13948 / NRRL B-527 / VKM B-1787 / 2291 / W).